Reading from the N-terminus, the 231-residue chain is Proteasome subunit alpha type-2 (231 aa).

Belongs to the peptidase T1A family. In terms of assembly, the 26S proteasome consists of a 20S proteasome core and two 19S regulatory subunits. The 20S proteasome core is composed of 28 subunits that are arranged in four stacked rings, resulting in a barrel-shaped structure. The two end rings are each formed by seven alpha subunits, and the two central rings are each formed by seven beta subunits. The catalytic chamber with the active sites is on the inside of the barrel.

It localises to the cytoplasm. The protein localises to the nucleus. In terms of biological role, the proteasome is a multicatalytic proteinase complex which is characterized by its ability to cleave peptides with Arg, Phe, Tyr, Leu, and Glu adjacent to the leaving group at neutral or slightly basic pH. The proteasome has an ATP-dependent proteolytic activity. The chain is Proteasome subunit alpha type-2 (pas-2) from Caenorhabditis elegans.